The sequence spans 306 residues: UDP-3-O-acyl-N-acetylglucosamine deacetylase (306 aa).

3 residues coordinate Zn(2+): His-79, His-238, and Asp-242. Catalysis depends on His-265, which acts as the Proton donor.

Belongs to the LpxC family. Zn(2+) serves as cofactor.

It carries out the reaction a UDP-3-O-[(3R)-3-hydroxyacyl]-N-acetyl-alpha-D-glucosamine + H2O = a UDP-3-O-[(3R)-3-hydroxyacyl]-alpha-D-glucosamine + acetate. It functions in the pathway glycolipid biosynthesis; lipid IV(A) biosynthesis; lipid IV(A) from (3R)-3-hydroxytetradecanoyl-[acyl-carrier-protein] and UDP-N-acetyl-alpha-D-glucosamine: step 2/6. Functionally, catalyzes the hydrolysis of UDP-3-O-myristoyl-N-acetylglucosamine to form UDP-3-O-myristoylglucosamine and acetate, the committed step in lipid A biosynthesis. The polypeptide is UDP-3-O-acyl-N-acetylglucosamine deacetylase (Shewanella frigidimarina (strain NCIMB 400)).